An 862-amino-acid chain; its full sequence is Switch 2 (862 aa).

Disordered regions lie at residues 13–43 (PCGS…SSLS) and 58–95 (KHES…DDER). Residues 16–27 (SFPSSSSLRVSS) are compositionally biased toward low complexity. Residues 58 to 84 (KHESKISKTQVEDFDHNEDDHKRNIKF) are compositionally biased toward basic and acidic residues. A compositionally biased stretch (acidic residues) spans 85–95 (DEEEVDEDDER). Residues 151–323 (YNLYKNNHGG…FNLFEWVAPG (173 aa)) enclose the Helicase ATP-binding domain. 164–171 (DDMGLGKT) provides a ligand contact to ATP. The short motif at 274–277 (DEAH) is the DEAH box element. A coiled-coil region spans residues 274 to 294 (DEAHRLKNEKSKLYEACLEIK). The region spanning 532–685 (ALEKLMASWI…VAGKMETRYF (154 aa)) is the Helicase C-terminal domain. Positions 782 to 793 (TTSTSQRLNGDG) are enriched in polar residues. The tract at residues 782–821 (TTSTSQRLNGDGNSADRKKKKRKGCSEEEDMSSSNREQKR) is disordered.

Belongs to the SNF2/RAD54 helicase family.

In terms of biological role, may be involved in early DNA damage response. Probable chromatin remodeling factor. This is Switch 2 from Arabidopsis thaliana (Mouse-ear cress).